The primary structure comprises 458 residues: UDP-N-acetylmuramate--L-alanine ligase (458 aa).

ATP is bound at residue 115 to 121; that stretch reads GSHGKTT.

It belongs to the MurCDEF family.

Its subcellular location is the cytoplasm. It catalyses the reaction UDP-N-acetyl-alpha-D-muramate + L-alanine + ATP = UDP-N-acetyl-alpha-D-muramoyl-L-alanine + ADP + phosphate + H(+). It participates in cell wall biogenesis; peptidoglycan biosynthesis. Cell wall formation. The chain is UDP-N-acetylmuramate--L-alanine ligase from Anaeromyxobacter dehalogenans (strain 2CP-C).